Here is a 100-residue protein sequence, read N- to C-terminus: Small ribosomal subunit protein uS14c (100 aa).

The protein belongs to the universal ribosomal protein uS14 family. In terms of assembly, part of the 30S ribosomal subunit.

It localises to the plastid. The protein localises to the chloroplast. In terms of biological role, binds 16S rRNA, required for the assembly of 30S particles. This chain is Small ribosomal subunit protein uS14c, found in Mesostigma viride (Green alga).